We begin with the raw amino-acid sequence, 241 residues long: Ribonuclease PH (241 aa).

Phosphate is bound by residues R89 and 127–129 (GTR).

The protein belongs to the RNase PH family. In terms of assembly, homohexameric ring arranged as a trimer of dimers.

The catalysed reaction is tRNA(n+1) + phosphate = tRNA(n) + a ribonucleoside 5'-diphosphate. In terms of biological role, phosphorolytic 3'-5' exoribonuclease that plays an important role in tRNA 3'-end maturation. Removes nucleotide residues following the 3'-CCA terminus of tRNAs; can also add nucleotides to the ends of RNA molecules by using nucleoside diphosphates as substrates, but this may not be physiologically important. Probably plays a role in initiation of 16S rRNA degradation (leading to ribosome degradation) during starvation. The polypeptide is Ribonuclease PH (Xanthomonas oryzae pv. oryzae (strain MAFF 311018)).